An 881-amino-acid polypeptide reads, in one-letter code: MNGVNDIRETFLGFFEKNGHARRPSAPLVPQNDPTLLFVNAGMVPFKNIFTGAEKPFAPRATTSQKCVRAGGKHNDLDNVGYTARHHTFFEMLGNFSFGDYFKDDAVALAWELVTKEYGLDAKRLLVTVYAEDEEAPAIWKKVAGLDDSRIIRIATSDNFWSMGDTGPCGPCSEIFFDHGDKVAGGPPGSPDEDGDRFIEIWNLVFMQFEQHEGGKRTNLPKPSIDTGMGLERVAAVLQGVHNNYDIDLFRALIAAEEEVYGQKASGDKTASFRVIADHLRTSAFLVADGILPSNEGRGYVLRRIMRRAMRHGHMLGAREPQMHRLVPALVAEMGKAYPELGRAQVAIEAAIEQEEARFQRTLGNGLSLLDKAASELSPGEALPGDVAFRLSDTFGFPLDLTQDILRGRGIEVDVDGFETALDAQRETSRAGGFSSGDQATEEIWFSVRDEKGPTKFTGYSSTAGEGRLIAIAAGGALIETVTAGPAELVFDATPFYAESGGQAGDHGEIVFEDGARFVVRDVQKRAGDLHVHIGELVSGSVKTGMKAQMSVNAARRKAVMANHSATHLMHAALRKVLGPHVTQKGSLVEADRFRFDFSHGAPVTAAQLEAIEDEVNAQIRANIETGIKVTTPDKAIEAGALALFGEKYGDEVRVLSMGDAGEGGRPYSVELCGGIHVSRSGDIAVFTILSEGGVSAGIRRIEGATGAEALAYLKGRAQIAADVAESLKVPLKDLPRRVASLTEERRTLERELSEAKRKLAMGGGGGAPAGPEVINGVNLIARVAEGVGGKELRALVDEAKSKIGSGVVVFVGVDGGKAGVAIGVTKDLTEKFSAVELVKAAAAAIGGQGGGGRPDMAQAGGPDGDKANEALEAVRAALKG.

Residues His564, His568, Cys673, and His677 each coordinate Zn(2+). Residues 848–867 (GQGGGGRPDMAQAGGPDGDK) form a disordered region.

It belongs to the class-II aminoacyl-tRNA synthetase family. Zn(2+) is required as a cofactor.

It is found in the cytoplasm. It carries out the reaction tRNA(Ala) + L-alanine + ATP = L-alanyl-tRNA(Ala) + AMP + diphosphate. Catalyzes the attachment of alanine to tRNA(Ala) in a two-step reaction: alanine is first activated by ATP to form Ala-AMP and then transferred to the acceptor end of tRNA(Ala). Also edits incorrectly charged Ser-tRNA(Ala) and Gly-tRNA(Ala) via its editing domain. This Hyphomonas neptunium (strain ATCC 15444) protein is Alanine--tRNA ligase.